The chain runs to 116 residues: S-adenosylmethionine decarboxylase proenzyme (116 aa).

Ser-63 acts as the Schiff-base intermediate with substrate; via pyruvic acid in catalysis. Ser-63 carries the pyruvic acid (Ser); by autocatalysis modification. The active-site Proton acceptor; for processing activity is the His-68. The Proton donor; for catalytic activity role is filled by Cys-83.

Belongs to the prokaryotic AdoMetDC family. Type 1 subfamily. As to quaternary structure, heterotetramer of two alpha and two beta chains arranged as a dimer of alpha/beta heterodimers. It depends on pyruvate as a cofactor. Is synthesized initially as an inactive proenzyme. Formation of the active enzyme involves a self-maturation process in which the active site pyruvoyl group is generated from an internal serine residue via an autocatalytic post-translational modification. Two non-identical subunits are generated from the proenzyme in this reaction, and the pyruvate is formed at the N-terminus of the alpha chain, which is derived from the carboxyl end of the proenzyme. The post-translation cleavage follows an unusual pathway, termed non-hydrolytic serinolysis, in which the side chain hydroxyl group of the serine supplies its oxygen atom to form the C-terminus of the beta chain, while the remainder of the serine residue undergoes an oxidative deamination to produce ammonia and the pyruvoyl group blocking the N-terminus of the alpha chain.

It catalyses the reaction S-adenosyl-L-methionine + H(+) = S-adenosyl 3-(methylsulfanyl)propylamine + CO2. It functions in the pathway amine and polyamine biosynthesis; S-adenosylmethioninamine biosynthesis; S-adenosylmethioninamine from S-adenosyl-L-methionine: step 1/1. Functionally, catalyzes the decarboxylation of S-adenosylmethionine to S-adenosylmethioninamine (dcAdoMet), the propylamine donor required for the synthesis of the polyamines spermine and spermidine from the diamine putrescine. In Clostridium botulinum (strain 657 / Type Ba4), this protein is S-adenosylmethionine decarboxylase proenzyme.